The primary structure comprises 1915 residues: Cysteine repeat modular protein 2 (1915 aa).

Positions M1 to A23 are cleaved as a signal peptide. FU repeat units follow at residues L53 to V98, S104 to Q151, Q161 to K208, N210 to V263, and T267 to Q315. N138 carries N-linked (GlcNAc...) asparagine glycosylation. 3 N-linked (GlcNAc...) asparagine glycosylation sites follow: N274, N279, and N316. FU repeat units lie at residues S317–T362, Q373–Y422, T427–Q492, N496–N546, and T554–M602. N-linked (GlcNAc...) asparagine glycosylation occurs at N409. N-linked (GlcNAc...) asparagine glycans are attached at residues N496, N572, N603, and N621. FU repeat units lie at residues T606–N639, Y640–V686, and Q690–L739. A glycan (N-linked (GlcNAc...) asparagine) is linked at N742. FU repeat units lie at residues D760–Y814 and N818–Q865. N909, N930, N1051, N1085, and N1193 each carry an N-linked (GlcNAc...) asparagine glycan. Residues V1184–E1224 enclose the EGF-like domain. 3 disulfide bridges follow: C1188-C1200, C1194-C1212, and C1214-C1223. N-linked (GlcNAc...) asparagine glycans are attached at residues N1250, N1297, N1519, N1546, N1554, N1580, and N1596. A run of 5 helical transmembrane segments spans residues L1599–I1619, Y1662–L1682, S1704–F1724, G1763–F1783, and F1796–I1816. An N-linked (GlcNAc...) asparagine glycan is attached at N1867.

It is found in the membrane. Functionally, required for mucocyst secretion. This Tetrahymena thermophila (strain SB210) protein is Cysteine repeat modular protein 2.